A 207-amino-acid chain; its full sequence is Guanylate kinase (207 aa).

The 181-residue stretch at 4 to 184 folds into the Guanylate kinase-like domain; that stretch reads GTLYIVSAPS…ALLDLKTIIR (181 aa). 11–18 contacts ATP; it reads APSGAGKS.

This sequence belongs to the guanylate kinase family.

It localises to the cytoplasm. The enzyme catalyses GMP + ATP = GDP + ADP. Essential for recycling GMP and indirectly, cGMP. In Sodalis glossinidius (strain morsitans), this protein is Guanylate kinase.